We begin with the raw amino-acid sequence, 565 residues long: Oxygen-dependent choline dehydrogenase (565 aa).

Aspartate 6 to glutamate 35 contributes to the FAD binding site. The active-site Proton acceptor is histidine 475. Positions arginine 541–alanine 565 are disordered.

This sequence belongs to the GMC oxidoreductase family. FAD serves as cofactor.

The catalysed reaction is choline + A = betaine aldehyde + AH2. It carries out the reaction betaine aldehyde + NAD(+) + H2O = glycine betaine + NADH + 2 H(+). Its pathway is amine and polyamine biosynthesis; betaine biosynthesis via choline pathway; betaine aldehyde from choline (cytochrome c reductase route): step 1/1. Involved in the biosynthesis of the osmoprotectant glycine betaine. Catalyzes the oxidation of choline to betaine aldehyde and betaine aldehyde to glycine betaine at the same rate. The chain is Oxygen-dependent choline dehydrogenase from Ectopseudomonas mendocina (strain ymp) (Pseudomonas mendocina).